The following is a 307-amino-acid chain: Barttin (307 aa).

The Cytoplasmic portion of the chain corresponds to 1–5 (MADEK). Positions 1-72 (MADEKTFRIG…VPADSDFQGI (72 aa)) are regulates channel membrane trafficking and anion conductance. A helical membrane pass occupies residues 6-26 (TFRIGFIVLGLFLLSLGTFLM). The Extracellular segment spans residues 27–32 (SHDRPQ). A helical membrane pass occupies residues 33-53 (VYGTFYAMGSVMVIGGVIWSM). 2 S-palmitoyl cysteine lipidation sites follow: C54 and C56. Over 54-307 (CQCYPKITFV…ELGFEPDIQG (254 aa)) the chain is Cytoplasmic. Phosphoserine is present on residues S79 and S107. 2 disordered regions span residues 135-154 (TGASSVREGEPRTAQAWMEA) and 161-224 (GSDE…RGPL). A compositionally biased stretch (basic and acidic residues) spans 161-171 (GSDENEGEKSH). S162 carries the phosphoserine modification. The span at 172 to 183 (SQSSPSVGPQGS) shows a compositional bias: low complexity. The segment covering 198–207 (SEGSSLQPSP) has biased composition (polar residues). A phosphoserine mark is found at S228 and S289. The tract at residues 255–307 (RKQQWSLRMKGETVQARAEEPEQEEEDLYYGLPDSPGNPLPDKELGFEPDIQG) is disordered.

In terms of assembly, interacts with CLCNK channels. Forms probably heteromers with CLCNKA in the thin ascending limb of Henle and with CLCNKB in the thick ascending limb and more distal segments. In terms of processing, palmitoylation is necessary for activation of plasma membrane-inserted CLC-K/barttin channels. Expression is evident in inner and outer stripes of the outer medulla of the kidney, most probably representing thin limbs of Henle's loop together with some collecting duct coursing through the outer stripe. In situ hybridization in fetal kidney at 18.5 dpc revealed a clear continuity between hybridization signals from the thin limb of Henle's loop and the distal convoluted tubule, suggesting that part of the expression pattern may result from expression in the thick ascending limb of Henle's loop. In addition, strong signals are present in a subset of cortical tubules, representing distal convoluted tubules or cortical collecting duct. Strong expression is also observed in the inner medulla of the kidney. This expression does not extend all the way to the tip of the papilla. Thus this signal most probably represents cells of the thin ascending limbs. In the inner ear, strong and exclusive expression is detected in marginal cells of the stria vascularis. In addition to cochlear signal, expression is observed in dark cells localized at the base of the crista ampullaris of the vestibular organ.

The protein localises to the basolateral cell membrane. Its function is as follows. Regulatory subunit of anion-selective CLCNKA:BSND and CLCNKB:BSND heteromeric channels involved in basolateral chloride conductance along the nephron to achieve urine concentration and maintain systemic acid-base homeostasis, and in the stria vascularis of the inner ear to establish the endocochlear potential necessary for normal hearing. Most likely acts as a chaperone that allosterically regulates proper sorting of CLCNKA:BSND and CLCNKB:BSND channels at the basolateral plasma membrane domain and functional switch to ion conducting state. Mediates constitutive opening of channel common gates. The protein is Barttin of Mus musculus (Mouse).